The following is a 93-amino-acid chain: CRISPR-associated endoribonuclease Cas2 2 (93 aa).

Asp-9 serves as a coordination point for Mg(2+).

This sequence belongs to the CRISPR-associated endoribonuclease Cas2 protein family. In terms of assembly, homodimer, forms a heterotetramer with a Cas1 homodimer. Mg(2+) is required as a cofactor.

CRISPR (clustered regularly interspaced short palindromic repeat), is an adaptive immune system that provides protection against mobile genetic elements (viruses, transposable elements and conjugative plasmids). CRISPR clusters contain sequences complementary to antecedent mobile elements and target invading nucleic acids. CRISPR clusters are transcribed and processed into CRISPR RNA (crRNA). Functions as a ssRNA-specific endoribonuclease. Involved in the integration of spacer DNA into the CRISPR cassette. The chain is CRISPR-associated endoribonuclease Cas2 2 from Synechocystis sp. (strain ATCC 27184 / PCC 6803 / Kazusa).